We begin with the raw amino-acid sequence, 111 residues long: MAMQKAKEIVNSESVVVFSKTYCPYCVRVKELLQQLGAKFKAVELDTESDGSQIQSGLAEWTGQRTVPNVFIGGNHIGGCDATSNLHKDGKLVPLLTEAGAIAGKTATTSA.

The Glutaredoxin domain maps to 3 to 103 (MQKAKEIVNS…PLLTEAGAIA (101 aa)). Cysteine 23 and cysteine 26 are oxidised to a cystine.

The protein belongs to the glutaredoxin family. CPYC subfamily.

It localises to the cytoplasm. Has a glutathione-disulfide oxidoreductase activity in the presence of NADPH and glutathione reductase. Reduces low molecular weight disulfides and proteins. In Arabidopsis thaliana (Mouse-ear cress), this protein is Glutaredoxin-C2 (GRXC2).